We begin with the raw amino-acid sequence, 468 residues long: Tissue alpha-L-fucosidase (468 aa).

Positions 1 to 29 are cleaved as a signal peptide; it reads MRAPGERWRPAGAALWLLLLLLLLGATES. Thr-172 is modified (phosphothreonine). 3 N-linked (GlcNAc...) asparagine glycosylation sites follow: Asn-243, Asn-270, and Asn-384.

Belongs to the glycosyl hydrolase 29 family. Homotetramer.

It is found in the lysosome. It catalyses the reaction an alpha-L-fucoside + H2O = L-fucose + an alcohol. The catalysed reaction is a neolactoside IV(2)-alpha-Fuc-nLc4Cer(d18:1(4E)) + H2O = a neolactoside nLc4Cer(d18:1(4E)) + L-fucose. The enzyme catalyses a neolactoside IV(2)-alpha-Fuc-nLc4Cer(d18:0) + H2O = a neolactoside nLc4Cer(d18:0) + L-fucose. In terms of biological role, alpha-L-fucosidase is responsible for hydrolyzing the alpha-1,6-linked fucose joined to the reducing-end N-acetylglucosamine of the carbohydrate moieties of glycoproteins. This is Tissue alpha-L-fucosidase (FUCA1) from Macaca fascicularis (Crab-eating macaque).